The chain runs to 312 residues: Ceroid-lipofuscinosis neuronal protein 6 homolog (312 aa).

Residues 1-10 (MEAAARRRQH) are compositionally biased toward basic residues. Residues 1-22 (MEAAARRRQHPGAAGGAGAQPG) form a disordered region. 7 consecutive transmembrane segments (helical) span residues 57 to 77 (WVLDFGRPIAMLVFPLEWFPL), 82 to 102 (VGDYFHMAYNIITPFLLLKLI), 112 to 132 (SVIYVSIITFVMGASIHLVGD), 178 to 198 (GHCMWYVPFFLILFIYFSGCF), 205 to 225 (SSMPGAALLLAMPSGLYYWYL), 226 to 246 (VTEGQIFILFIFTFFAMLALV), and 261 to 281 (LFLFYSFALTLLLVALWVAWL).

Interacts with CRMP2. Interacts with CLN5. Interacts with CLN5. Interacts with CLN3.

The protein localises to the endoplasmic reticulum membrane. It localises to the endoplasmic reticulum. The chain is Ceroid-lipofuscinosis neuronal protein 6 homolog (CLN6) from Canis lupus familiaris (Dog).